A 947-amino-acid polypeptide reads, in one-letter code: Protocadherin alpha-4 (947 aa).

The N-terminal stretch at 1–29 (MEFSWGSGQESRRLLLLLLLLSAWEAGNG) is a signal peptide. 6 Cadherin domains span residues 30 to 133 (QLHY…PPVF), 134 to 242 (PATQ…APAF), 243 to 350 (DRTI…VPDL), 351 to 455 (EFKS…APAF), 456 to 565 (AQPE…APAL), and 588 to 678 (DHVV…APKA). Topologically, residues 30 to 697 (QLHYSVSEEA…GPDAALVDVN (668 aa)) are extracellular. Cysteines 96 and 102 form a disulfide. N-linked (GlcNAc...) asparagine glycans are attached at residues Asn-139, Asn-257, and Asn-265. Asn-548 carries N-linked (GlcNAc...) asparagine glycosylation. A helical membrane pass occupies residues 698–718 (VYLIIAICAVSSLLVLTLLLY). Topologically, residues 719–947 (TALRCSAPPT…GNSTTDNSDQ (229 aa)) are cytoplasmic. PXXP repeat units lie at residues 734-737 (PGKP), 774-777 (PSLP), 796-799 (PRQP), 829-832 (PGGP), 870-873 (PGNP), and 888-891 (PGSP). The segment at 734-891 (PGKPTLVCSS…PDKFIIPGSP (158 aa)) is 6 X 4 AA repeats of P-X-X-P. Residues 738-947 (TLVCSSAVGS…GNSTTDNSDQ (210 aa)) form a required for interaction with FYN region. Disordered stretches follow at residues 754–805 (RRPR…DWRY) and 828–853 (GPGG…EVSP). The interval 892 to 947 (AIISIRQEPANSQIDKSDFITFGKKEETKKKKKKKKGNKTQEKKEKGNSTTDNSDQ) is disordered. Residues 906 to 920 (DKSDFITFGKKEETK) are compositionally biased toward basic and acidic residues.

Forms homodimers in trans (molecules expressed by two different cells). Forms promiscuous heterodimers in cis (at the plasma membrane of the same cell) with other protocadherins. Interacts with FYN.

It localises to the cell membrane. Calcium-dependent cell-adhesion protein involved in cells self-recognition and non-self discrimination. Thereby, it is involved in the establishment and maintenance of specific neuronal connections in the brain. The protein is Protocadherin alpha-4 of Pan troglodytes (Chimpanzee).